The chain runs to 1052 residues: Swarming motility protein SwrC (1052 aa).

The protein belongs to the resistance-nodulation-cell division (RND) (TC 2.A.6) family.

Required for self-resistance to surfactin, an antimicrobial lipopeptide surfactant produced by B.subtilis. Also required for swarming motility. The chain is Swarming motility protein SwrC (swrC) from Bacillus subtilis (strain 168).